The sequence spans 350 residues: Heat-inducible transcription repressor HrcA (350 aa).

This sequence belongs to the HrcA family.

Negative regulator of class I heat shock genes (grpE-dnaK-dnaJ and groELS operons). Prevents heat-shock induction of these operons. This chain is Heat-inducible transcription repressor HrcA, found in Xanthomonas oryzae pv. oryzae (strain KACC10331 / KXO85).